Consider the following 3187-residue polypeptide: Cilia- and flagella-associated protein 47 (3187 aa).

A Calponin-homology (CH) domain is found at 1746–1869; it reads SDSERILLSW…LCVYMYERLP (124 aa). The disordered stretch occupies residues 2024 to 2052; sequence KLTESRQYPKHDDDMSSSGSDTDQGCSDS. A compositionally biased stretch (basic and acidic residues) spans 2026 to 2037; it reads TESRQYPKHDDD.

Interacts with CFAP65. As to expression, highly expressed in spermatzoa (at protein level).

It is found in the cytoplasm. Its subcellular location is the cytoskeleton. It localises to the flagellum basal body. Its function is as follows. Plays a role in flagellar formation and sperm motility. The chain is Cilia- and flagella-associated protein 47 from Homo sapiens (Human).